The chain runs to 472 residues: Probable dipeptidase A (472 aa).

The active site involves cysteine 10.

It belongs to the peptidase C69 family.

The catalysed reaction is an L-aminoacyl-L-amino acid + H2O = 2 an L-alpha-amino acid. This chain is Probable dipeptidase A (pepDA), found in Streptococcus pyogenes serotype M18 (strain MGAS8232).